A 135-amino-acid chain; its full sequence is Large ribosomal subunit protein uL16c (135 aa).

The protein belongs to the universal ribosomal protein uL16 family. As to quaternary structure, part of the 50S ribosomal subunit.

It localises to the plastid. The protein localises to the chloroplast. The sequence is that of Large ribosomal subunit protein uL16c from Piper cenocladum (Ant piper).